We begin with the raw amino-acid sequence, 357 residues long: Fructose-bisphosphate aldolase, cytoplasmic isozyme (357 aa).

Substrate contacts are provided by Arg-53 and Lys-142. The active-site Proton acceptor is the Glu-183. The active-site Schiff-base intermediate with dihydroxyacetone-P is Lys-225.

It belongs to the class I fructose-bisphosphate aldolase family.

Its subcellular location is the cytoplasm. The enzyme catalyses beta-D-fructose 1,6-bisphosphate = D-glyceraldehyde 3-phosphate + dihydroxyacetone phosphate. It functions in the pathway carbohydrate degradation; glycolysis; D-glyceraldehyde 3-phosphate and glycerone phosphate from D-glucose: step 4/4. In Spinacia oleracea (Spinach), this protein is Fructose-bisphosphate aldolase, cytoplasmic isozyme.